The primary structure comprises 141 residues: Pheromone-binding protein-related protein 6 (141 aa).

A signal peptide spans methionine 1–alanine 16. 3 disulfide bridges follow: cysteine 41/cysteine 72, cysteine 68/cysteine 120, and cysteine 111/cysteine 129.

This sequence belongs to the PBP/GOBP family. In terms of tissue distribution, antenna. Mostly expressed in two types of sensory hairs, sensilla trichodea and small sensilla basiconica, in the ventro-lateral region of the third antennal segment (at protein level).

It is found in the secreted. The protein is Pheromone-binding protein-related protein 6 (Obp83b) of Drosophila melanogaster (Fruit fly).